The chain runs to 149 residues: Low molecular weight protein-tyrosine-phosphatase Wzb (149 aa).

The active-site Nucleophile is Cys9. Arg15 is a catalytic residue. The Proton donor role is filled by Asp115.

This sequence belongs to the low molecular weight phosphotyrosine protein phosphatase family.

The catalysed reaction is O-phospho-L-tyrosyl-[protein] + H2O = L-tyrosyl-[protein] + phosphate. The protein operates within glycan metabolism; exopolysaccharide biosynthesis. Functionally, dephosphorylates Wzc. Required for the extracellular polysaccharide colanic acid synthesis. Probably involved in the export of colanic acid from the cell to medium. Involved in protection of cells against contact-dependent growth inhibition (CDI). This chain is Low molecular weight protein-tyrosine-phosphatase Wzb (wzb), found in Salmonella typhi.